The chain runs to 148 residues: HTH-type transcriptional regulator Ptr1 (148 aa).

Positions 2–63 constitute an HTH asnC-type domain; it reads LDRIDLKILR…SINPKNLGFE (62 aa). The segment at residues 21–40 is a DNA-binding region (H-T-H motif); the sequence is FREIGRELGISEGTVRNRVK.

As to quaternary structure, homodimer.

Functionally, participates in positive as well as negative regulation of transcription. Binds to its own promoter. The sequence is that of HTH-type transcriptional regulator Ptr1 (ptr1) from Methanocaldococcus jannaschii (strain ATCC 43067 / DSM 2661 / JAL-1 / JCM 10045 / NBRC 100440) (Methanococcus jannaschii).